The chain runs to 101 residues: Large ribosomal subunit protein uL23 (101 aa).

This sequence belongs to the universal ribosomal protein uL23 family. In terms of assembly, part of the 50S ribosomal subunit. Contacts protein L29, and trigger factor when it is bound to the ribosome.

Functionally, one of the early assembly proteins it binds 23S rRNA. One of the proteins that surrounds the polypeptide exit tunnel on the outside of the ribosome. Forms the main docking site for trigger factor binding to the ribosome. The polypeptide is Large ribosomal subunit protein uL23 (Corynebacterium efficiens (strain DSM 44549 / YS-314 / AJ 12310 / JCM 11189 / NBRC 100395)).